Here is a 247-residue protein sequence, read N- to C-terminus: ATP synthase subunit a (247 aa).

The next 6 membrane-spanning stretches (helical) occupy residues 24 to 44 (IAFTNSSAYMLVAVVLTSLLM), 82 to 102 (FFPFVFTIFMLVTVSNLVGIV), 112 to 132 (IIVTAALAFLVFFTVLIYGFY), 141 to 161 (LFVPSGIPIVILPLVVAIEVI), 194 to 214 (MLGAMGIVGVFGAVLPLALVV), and 219 to 239 (LELLVAFLQAYVFTILTCIYI).

This sequence belongs to the ATPase A chain family. As to quaternary structure, F-type ATPases have 2 components, CF(1) - the catalytic core - and CF(0) - the membrane proton channel. CF(1) has five subunits: alpha(3), beta(3), gamma(1), delta(1), epsilon(1). CF(0) has three main subunits: a(1), b(2) and c(9-12). The alpha and beta chains form an alternating ring which encloses part of the gamma chain. CF(1) is attached to CF(0) by a central stalk formed by the gamma and epsilon chains, while a peripheral stalk is formed by the delta and b chains.

It localises to the cell inner membrane. Key component of the proton channel; it plays a direct role in the translocation of protons across the membrane. The polypeptide is ATP synthase subunit a (Nitrobacter hamburgensis (strain DSM 10229 / NCIMB 13809 / X14)).